The following is a 180-amino-acid chain: Large ribosomal subunit protein uL5 (180 aa).

The protein belongs to the universal ribosomal protein uL5 family. As to quaternary structure, part of the 50S ribosomal subunit; part of the 5S rRNA/L5/L18/L25 subcomplex. Contacts the 5S rRNA and the P site tRNA. Forms a bridge to the 30S subunit in the 70S ribosome.

Its function is as follows. This is one of the proteins that bind and probably mediate the attachment of the 5S RNA into the large ribosomal subunit, where it forms part of the central protuberance. In the 70S ribosome it contacts protein S13 of the 30S subunit (bridge B1b), connecting the 2 subunits; this bridge is implicated in subunit movement. Contacts the P site tRNA; the 5S rRNA and some of its associated proteins might help stabilize positioning of ribosome-bound tRNAs. The chain is Large ribosomal subunit protein uL5 from Synechococcus sp. (strain JA-2-3B'a(2-13)) (Cyanobacteria bacterium Yellowstone B-Prime).